Consider the following 707-residue polypeptide: Serine/threonine protein kinase UL97 (707 aa).

Residues 1 to 14 (MSSALRSRARSASL) show a composition bias toward low complexity. Disordered regions lie at residues 1–32 (MSSA…PSRA), 115–146 (EKED…GDGY), 176–199 (FTGG…PLRP), and 231–264 (ESQD…EADS). The segment covering 115-127 (EKEDAASDKENLR) has biased composition (basic and acidic residues). The span at 178–188 (GGSDPSDSVSG) shows a compositional bias: low complexity. ATP-binding positions include 337–345 (LGQGSFGEV) and lysine 359. The Proton acceptor role is filled by aspartate 456.

It belongs to the protein kinase superfamily. Tyr protein kinase family. HCMV ganciclovir subfamily. Interacts with UL83. Autophosphorylates on serine and threonine residues.

The protein localises to the virion. It catalyses the reaction L-seryl-[protein] + ATP = O-phospho-L-seryl-[protein] + ADP + H(+). The catalysed reaction is L-threonyl-[protein] + ATP = O-phospho-L-threonyl-[protein] + ADP + H(+). Serine/threonine protein kinase that plays important roles in several processes including nuclear viral egress, viral replication or regulation of host cell cycle progression. Participates in the acquisition of tegument during virion morphogenesis in the nucleus. Redistributes the host nuclear lamina by phosphorylating cellular Lamins-A/C. Plays a role in viral DNA synthesis by phosphorylating the DNA polymerase processivity factor UL44. Stimulates host cell cycle to support viral DNA synthesis by phosphorylating host retinoblastoma/RB1 protein. Additional substrates have been identified including host EF1D or H2B. Also phosphorylates host SAMHD1 and thereby counteracts its antiviral effect by reducing its dNTP hydrolase activity. This Human cytomegalovirus (strain Towne) (HHV-5) protein is Serine/threonine protein kinase UL97 (UL97).